Consider the following 133-residue polypeptide: ATP synthase epsilon chain, chloroplastic (133 aa).

Belongs to the ATPase epsilon chain family. In terms of assembly, F-type ATPases have 2 components, CF(1) - the catalytic core - and CF(0) - the membrane proton channel. CF(1) has five subunits: alpha(3), beta(3), gamma(1), delta(1), epsilon(1). CF(0) has three main subunits: a, b and c.

The protein resides in the plastid. It is found in the chloroplast thylakoid membrane. Its function is as follows. Produces ATP from ADP in the presence of a proton gradient across the membrane. The polypeptide is ATP synthase epsilon chain, chloroplastic (Gossypium barbadense (Sea Island cotton)).